Consider the following 124-residue polypeptide: Ribonuclease P protein component (124 aa).

Belongs to the RnpA family. In terms of assembly, consists of a catalytic RNA component (M1 or rnpB) and a protein subunit.

The catalysed reaction is Endonucleolytic cleavage of RNA, removing 5'-extranucleotides from tRNA precursor.. In terms of biological role, RNaseP catalyzes the removal of the 5'-leader sequence from pre-tRNA to produce the mature 5'-terminus. It can also cleave other RNA substrates such as 4.5S RNA. The protein component plays an auxiliary but essential role in vivo by binding to the 5'-leader sequence and broadening the substrate specificity of the ribozyme. This Synechocystis sp. (strain ATCC 27184 / PCC 6803 / Kazusa) protein is Ribonuclease P protein component.